A 314-amino-acid polypeptide reads, in one-letter code: Malate dehydrogenase (314 aa).

NAD(+) is bound by residues 7–13 and aspartate 34; that span reads GAAGGIG. 2 residues coordinate substrate: arginine 81 and arginine 87. Residues asparagine 94 and 117 to 119 each bind NAD(+); that span reads ITN. Positions 119 and 153 each coordinate substrate. The active-site Proton acceptor is the histidine 177. Methionine 230 serves as a coordination point for NAD(+).

The protein belongs to the LDH/MDH superfamily. MDH type 1 family. As to quaternary structure, homodimer.

The enzyme catalyses (S)-malate + NAD(+) = oxaloacetate + NADH + H(+). Functionally, catalyzes the reversible oxidation of malate to oxaloacetate. This chain is Malate dehydrogenase, found in Glaesserella parasuis serovar 5 (strain SH0165) (Haemophilus parasuis).